A 795-amino-acid chain; its full sequence is Phenylalanine--tRNA ligase beta subunit (795 aa).

In terms of domain architecture, tRNA-binding spans 39 to 148; sequence AGSFHGVVVG…ADAPIGTDIR (110 aa). Residues 401-476 form the B5 domain; the sequence is PKRATITLRR…RVYGYNNIPD (76 aa). Positions 454, 460, 463, and 464 each coordinate Mg(2+). An FDX-ACB domain is found at 701–794; sequence SRFPANRRDI…LKERFQASLR (94 aa).

The protein belongs to the phenylalanyl-tRNA synthetase beta subunit family. Type 1 subfamily. Tetramer of two alpha and two beta subunits. Mg(2+) serves as cofactor.

The protein resides in the cytoplasm. The enzyme catalyses tRNA(Phe) + L-phenylalanine + ATP = L-phenylalanyl-tRNA(Phe) + AMP + diphosphate + H(+). The polypeptide is Phenylalanine--tRNA ligase beta subunit (Shigella sonnei (strain Ss046)).